The chain runs to 207 residues: LexA repressor (207 aa).

A DNA-binding region (H-T-H motif) is located at residues 33–52; sequence VKEMSETFGISHASVHDRIN. Residues serine 129 and lysine 166 each act as for autocatalytic cleavage activity in the active site.

Belongs to the peptidase S24 family. In terms of assembly, homodimer.

The enzyme catalyses Hydrolysis of Ala-|-Gly bond in repressor LexA.. Functionally, represses a number of genes involved in the response to DNA damage (SOS response), including recA and lexA. In the presence of single-stranded DNA, RecA interacts with LexA causing an autocatalytic cleavage which disrupts the DNA-binding part of LexA, leading to derepression of the SOS regulon and eventually DNA repair. The chain is LexA repressor from Oleidesulfovibrio alaskensis (strain ATCC BAA-1058 / DSM 17464 / G20) (Desulfovibrio alaskensis).